The sequence spans 602 residues: Elongation factor 4 (602 aa).

The region spanning 7 to 189 (KYIRNFSIVA…AIVNKVPAPD (183 aa)) is the tr-type G domain. Residues 19–24 (DHGKST) and 136–139 (NKID) each bind GTP.

It belongs to the TRAFAC class translation factor GTPase superfamily. Classic translation factor GTPase family. LepA subfamily.

It localises to the cell membrane. It carries out the reaction GTP + H2O = GDP + phosphate + H(+). Required for accurate and efficient protein synthesis under certain stress conditions. May act as a fidelity factor of the translation reaction, by catalyzing a one-codon backward translocation of tRNAs on improperly translocated ribosomes. Back-translocation proceeds from a post-translocation (POST) complex to a pre-translocation (PRE) complex, thus giving elongation factor G a second chance to translocate the tRNAs correctly. Binds to ribosomes in a GTP-dependent manner. This chain is Elongation factor 4, found in Clostridium botulinum (strain ATCC 19397 / Type A).